A 106-amino-acid polypeptide reads, in one-letter code: ATP-dependent Clp protease adapter protein ClpS (106 aa).

The protein belongs to the ClpS family. In terms of assembly, binds to the N-terminal domain of the chaperone ClpA.

Functionally, involved in the modulation of the specificity of the ClpAP-mediated ATP-dependent protein degradation. The sequence is that of ATP-dependent Clp protease adapter protein ClpS from Escherichia coli O139:H28 (strain E24377A / ETEC).